Here is a 513-residue protein sequence, read N- to C-terminus: Histidine ammonia-lyase (513 aa).

A cross-link (5-imidazolinone (Ala-Gly)) is located at residues 144–146; that stretch reads ASG. Position 145 is a 2,3-didehydroalanine (Ser) (Ser-145).

This sequence belongs to the PAL/histidase family. Contains an active site 4-methylidene-imidazol-5-one (MIO), which is formed autocatalytically by cyclization and dehydration of residues Ala-Ser-Gly.

It localises to the cytoplasm. The enzyme catalyses L-histidine = trans-urocanate + NH4(+). The protein operates within amino-acid degradation; L-histidine degradation into L-glutamate; N-formimidoyl-L-glutamate from L-histidine: step 1/3. This chain is Histidine ammonia-lyase, found in Streptococcus gordonii (strain Challis / ATCC 35105 / BCRC 15272 / CH1 / DL1 / V288).